A 952-amino-acid chain; its full sequence is UPF0182 protein SRU_2225 (952 aa).

The next 7 membrane-spanning stretches (helical) occupy residues 12–32 (ILLG…GLVV), 52–72 (AQVL…GGNF), 109–129 (LGYV…SGRW), 168–188 (AVVG…VIAG), 207–227 (LGAN…LDLY), 247–267 (VVIP…GLVG), and 277–297 (LLGI…VLAP). The interval 917–952 (VPLPDTTGTVPPPTSSDTTGTMTAPTGDVSEVTGGS) is disordered. Residues 931–940 (SSDTTGTMTA) are compositionally biased toward polar residues.

This sequence belongs to the UPF0182 family.

The protein resides in the cell membrane. In Salinibacter ruber (strain DSM 13855 / M31), this protein is UPF0182 protein SRU_2225.